The sequence spans 475 residues: Sulfate adenylyltransferase subunit 1 (475 aa).

The tr-type G domain maps to 25 to 239 (KSLLRFLTCG…EVLETVEIQR (215 aa)). Residues 34–41 (GSVDDGKS) form a G1 region. A GTP-binding site is contributed by 34 to 41 (GSVDDGKS). Residues 92 to 96 (GITID) form a G2 region. The segment at 113 to 116 (DTPG) is G3. GTP-binding positions include 113–117 (DTPGH) and 168–171 (NKMD). Positions 168–171 (NKMD) are G4. Residues 206–208 (SAL) are G5.

This sequence belongs to the TRAFAC class translation factor GTPase superfamily. Classic translation factor GTPase family. CysN/NodQ subfamily. Heterodimer composed of CysD, the smaller subunit, and CysN.

The enzyme catalyses sulfate + ATP + H(+) = adenosine 5'-phosphosulfate + diphosphate. It participates in sulfur metabolism; hydrogen sulfide biosynthesis; sulfite from sulfate: step 1/3. Functionally, with CysD forms the ATP sulfurylase (ATPS) that catalyzes the adenylation of sulfate producing adenosine 5'-phosphosulfate (APS) and diphosphate, the first enzymatic step in sulfur assimilation pathway. APS synthesis involves the formation of a high-energy phosphoric-sulfuric acid anhydride bond driven by GTP hydrolysis by CysN coupled to ATP hydrolysis by CysD. The polypeptide is Sulfate adenylyltransferase subunit 1 (Shigella sonnei (strain Ss046)).